The primary structure comprises 100 residues: Aspartyl/glutamyl-tRNA(Asn/Gln) amidotransferase subunit C (100 aa).

The protein belongs to the GatC family. Heterotrimer of A, B and C subunits.

It catalyses the reaction L-glutamyl-tRNA(Gln) + L-glutamine + ATP + H2O = L-glutaminyl-tRNA(Gln) + L-glutamate + ADP + phosphate + H(+). It carries out the reaction L-aspartyl-tRNA(Asn) + L-glutamine + ATP + H2O = L-asparaginyl-tRNA(Asn) + L-glutamate + ADP + phosphate + 2 H(+). Functionally, allows the formation of correctly charged Asn-tRNA(Asn) or Gln-tRNA(Gln) through the transamidation of misacylated Asp-tRNA(Asn) or Glu-tRNA(Gln) in organisms which lack either or both of asparaginyl-tRNA or glutaminyl-tRNA synthetases. The reaction takes place in the presence of glutamine and ATP through an activated phospho-Asp-tRNA(Asn) or phospho-Glu-tRNA(Gln). The protein is Aspartyl/glutamyl-tRNA(Asn/Gln) amidotransferase subunit C of Streptococcus sanguinis (strain SK36).